A 283-amino-acid polypeptide reads, in one-letter code: Phosphatidylglycerol--prolipoprotein diacylglyceryl transferase (283 aa).

The next 4 helical transmembrane spans lie at 17–37 (LAVR…TFLG), 56–76 (FLTW…VLFY), 92–112 (WEGG…IWLF), and 117–137 (GIGF…GLAS). Arg139 contacts a 1,2-diacyl-sn-glycero-3-phospho-(1'-sn-glycerol). Helical transmembrane passes span 194 to 214 (PSQL…VWLF), 222 to 242 (GQVA…AEFA), and 255 to 275 (GLSM…VGFV).

It belongs to the Lgt family.

It localises to the cell inner membrane. It catalyses the reaction L-cysteinyl-[prolipoprotein] + a 1,2-diacyl-sn-glycero-3-phospho-(1'-sn-glycerol) = an S-1,2-diacyl-sn-glyceryl-L-cysteinyl-[prolipoprotein] + sn-glycerol 1-phosphate + H(+). The protein operates within protein modification; lipoprotein biosynthesis (diacylglyceryl transfer). Catalyzes the transfer of the diacylglyceryl group from phosphatidylglycerol to the sulfhydryl group of the N-terminal cysteine of a prolipoprotein, the first step in the formation of mature lipoproteins. The sequence is that of Phosphatidylglycerol--prolipoprotein diacylglyceryl transferase from Neisseria meningitidis serogroup A / serotype 4A (strain DSM 15465 / Z2491).